We begin with the raw amino-acid sequence, 471 residues long: V-type ATP synthase beta chain (471 aa).

The protein belongs to the ATPase alpha/beta chains family.

Functionally, produces ATP from ADP in the presence of a proton gradient across the membrane. The V-type beta chain is a regulatory subunit. This chain is V-type ATP synthase beta chain (atpB), found in Deinococcus radiodurans (strain ATCC 13939 / DSM 20539 / JCM 16871 / CCUG 27074 / LMG 4051 / NBRC 15346 / NCIMB 9279 / VKM B-1422 / R1).